A 557-amino-acid polypeptide reads, in one-letter code: Dihydroxy-acid dehydratase (557 aa).

C50 is a [2Fe-2S] cluster binding site. A Mg(2+)-binding site is contributed by D82. C123 contributes to the [2Fe-2S] cluster binding site. 2 residues coordinate Mg(2+): D124 and K125. K125 is modified (N6-carboxylysine). C195 lines the [2Fe-2S] cluster pocket. Residue E447 coordinates Mg(2+). The active-site Proton acceptor is S473.

It belongs to the IlvD/Edd family. As to quaternary structure, homodimer. The cofactor is [2Fe-2S] cluster. Mg(2+) is required as a cofactor.

It carries out the reaction (2R)-2,3-dihydroxy-3-methylbutanoate = 3-methyl-2-oxobutanoate + H2O. The enzyme catalyses (2R,3R)-2,3-dihydroxy-3-methylpentanoate = (S)-3-methyl-2-oxopentanoate + H2O. It participates in amino-acid biosynthesis; L-isoleucine biosynthesis; L-isoleucine from 2-oxobutanoate: step 3/4. It functions in the pathway amino-acid biosynthesis; L-valine biosynthesis; L-valine from pyruvate: step 3/4. In terms of biological role, functions in the biosynthesis of branched-chain amino acids. Catalyzes the dehydration of (2R,3R)-2,3-dihydroxy-3-methylpentanoate (2,3-dihydroxy-3-methylvalerate) into 2-oxo-3-methylpentanoate (2-oxo-3-methylvalerate) and of (2R)-2,3-dihydroxy-3-methylbutanoate (2,3-dihydroxyisovalerate) into 2-oxo-3-methylbutanoate (2-oxoisovalerate), the penultimate precursor to L-isoleucine and L-valine, respectively. In Burkholderia thailandensis (strain ATCC 700388 / DSM 13276 / CCUG 48851 / CIP 106301 / E264), this protein is Dihydroxy-acid dehydratase.